We begin with the raw amino-acid sequence, 445 residues long: rRNA methyltransferase 3B, mitochondrial (445 aa).

A mitochondrion-targeting transit peptide spans 1 to 37 (MATRIASMRFRCALFQSALTLGRNEVNIKRYVRRRRA). Disordered regions lie at residues 52–90 (EGVI…SQPV) and 311–334 (HSTT…SDYG). Composition is skewed to polar residues over residues 54-70 (VISQ…NDIT), 78-90 (IENP…SQPV), and 311-324 (HSTT…NTTP). The S-adenosyl-L-methionine site is built by Gly-387, Ile-411, and Leu-420.

This sequence belongs to the class IV-like SAM-binding methyltransferase superfamily. RNA methyltransferase TrmH family.

The protein localises to the mitochondrion. It carries out the reaction a uridine in rRNA + S-adenosyl-L-methionine = a 2'-O-methyluridine in rRNA + S-adenosyl-L-homocysteine + H(+). Its function is as follows. S-adenosyl-L-methionine-dependent 2'-O-ribose methyltransferase that catalyzes the formation of 2'-O-methylguanosine at position 1485 (Gm1485) in the mitochondrial large subunit ribosomal RNA (mtLSU rRNA), a conserved modification in the peptidyl transferase domain of the mtLSU rRNA. Also required for formation of 2'-O-methyluridine at position 1484 (Um1484) mediated by MRM2. This chain is rRNA methyltransferase 3B, mitochondrial, found in Danio rerio (Zebrafish).